The sequence spans 222 residues: Exosome complex component Rrp4 (222 aa).

In terms of domain architecture, S1 motif spans 63-131 (NDSVIGKVVD…EVKKVKLGLH (69 aa)). Positions 139-200 (EGGTLAYITP…EIVKRALEMI (62 aa)) constitute a KH domain.

This sequence belongs to the RRP4 family. As to quaternary structure, component of the archaeal exosome complex. Forms a trimer of Rrp4 and/or Csl4 subunits. The trimer associates with a hexameric ring-like arrangement composed of 3 Rrp41-Rrp42 heterodimers.

Its subcellular location is the cytoplasm. In terms of biological role, non-catalytic component of the exosome, which is a complex involved in RNA degradation. Increases the RNA binding and the efficiency of RNA degradation. Confers strong poly(A) specificity to the exosome. In Methanothermus fervidus (strain ATCC 43054 / DSM 2088 / JCM 10308 / V24 S), this protein is Exosome complex component Rrp4.